A 477-amino-acid polypeptide reads, in one-letter code: Aspartyl/glutamyl-tRNA(Asn/Gln) amidotransferase subunit B (477 aa).

The protein belongs to the GatB/GatE family. GatB subfamily. In terms of assembly, heterotrimer of A, B and C subunits.

It carries out the reaction L-glutamyl-tRNA(Gln) + L-glutamine + ATP + H2O = L-glutaminyl-tRNA(Gln) + L-glutamate + ADP + phosphate + H(+). The catalysed reaction is L-aspartyl-tRNA(Asn) + L-glutamine + ATP + H2O = L-asparaginyl-tRNA(Asn) + L-glutamate + ADP + phosphate + 2 H(+). Its function is as follows. Allows the formation of correctly charged Asn-tRNA(Asn) or Gln-tRNA(Gln) through the transamidation of misacylated Asp-tRNA(Asn) or Glu-tRNA(Gln) in organisms which lack either or both of asparaginyl-tRNA or glutaminyl-tRNA synthetases. The reaction takes place in the presence of glutamine and ATP through an activated phospho-Asp-tRNA(Asn) or phospho-Glu-tRNA(Gln). The protein is Aspartyl/glutamyl-tRNA(Asn/Gln) amidotransferase subunit B of Coxiella burnetii (strain CbuK_Q154) (Coxiella burnetii (strain Q154)).